We begin with the raw amino-acid sequence, 282 residues long: Flagellin (282 aa).

The protein belongs to the bacterial flagellin family.

It localises to the secreted. The protein localises to the bacterial flagellum. Functionally, flagellin is the subunit protein which polymerizes to form the filaments of bacterial flagella. The flagellum is required to cause a persistent disease in a murine model of infection. This is Flagellin (fliC) from Brucella melitensis biotype 1 (strain ATCC 23456 / CCUG 17765 / NCTC 10094 / 16M).